A 346-amino-acid chain; its full sequence is Peroxidase 38 (346 aa).

Residues 1–22 form the signal peptide; that stretch reads MHSSLIKLGFLLLLLQVSLSHA. Q23 carries the post-translational modification Pyrrolidone carboxylic acid. Intrachain disulfides connect C33/C113, C66/C71, C119/C323, and C199/C231. Catalysis depends on H64, which acts as the Proton acceptor. Ca(2+)-binding residues include D65, V68, G70, D72, and S74. The N-linked (GlcNAc...) asparagine glycan is linked to N79. P161 lines the substrate pocket. H192 is a binding site for heme b. Position 193 (T193) interacts with Ca(2+). N-linked (GlcNAc...) asparagine glycosylation is present at N236. Residues D244, T247, and D252 each contribute to the Ca(2+) site.

The protein belongs to the peroxidase family. Classical plant (class III) peroxidase subfamily. Heme b serves as cofactor. Ca(2+) is required as a cofactor.

The protein localises to the secreted. It localises to the vacuole. The enzyme catalyses 2 a phenolic donor + H2O2 = 2 a phenolic radical donor + 2 H2O. Its function is as follows. Removal of H(2)O(2), oxidation of toxic reductants, biosynthesis and degradation of lignin, suberization, auxin catabolism, response to environmental stresses such as wounding, pathogen attack and oxidative stress. These functions might be dependent on each isozyme/isoform in each plant tissue. In Arabidopsis thaliana (Mouse-ear cress), this protein is Peroxidase 38 (PER38).